We begin with the raw amino-acid sequence, 120 residues long: Peptidyl-tRNA hydrolase (120 aa).

The protein belongs to the PTH2 family. Homodimer.

It is found in the cytoplasm. It catalyses the reaction an N-acyl-L-alpha-aminoacyl-tRNA + H2O = an N-acyl-L-amino acid + a tRNA + H(+). The natural substrate for this enzyme may be peptidyl-tRNAs which drop off the ribosome during protein synthesis. This is Peptidyl-tRNA hydrolase from Saccharolobus solfataricus (strain ATCC 35092 / DSM 1617 / JCM 11322 / P2) (Sulfolobus solfataricus).